The chain runs to 120 residues: Large ribosomal subunit protein uL18 (120 aa).

Belongs to the universal ribosomal protein uL18 family. In terms of assembly, part of the 50S ribosomal subunit; part of the 5S rRNA/L5/L18/L25 subcomplex. Contacts the 5S and 23S rRNAs.

Its function is as follows. This is one of the proteins that bind and probably mediate the attachment of the 5S RNA into the large ribosomal subunit, where it forms part of the central protuberance. This Trichodesmium erythraeum (strain IMS101) protein is Large ribosomal subunit protein uL18.